Consider the following 260-residue polypeptide: HTH-type transcriptional repressor NanR (260 aa).

The tract at residues 1–22 (MNAFDSQAEDSPTSLGRSLRRR) is disordered. In terms of domain architecture, HTH gntR-type spans 27-95 (KKLSEMVEEE…NGERARVSRP (69 aa)). Residues 55-74 (ERELMAFFNVGRPSVREALA) constitute a DNA-binding region (H-T-H motif).

Belongs to the NanR family.

Its function is as follows. Transcriptional repressor that controls expression of the genes required for the catabolism of sialic acids. This Salmonella newport (strain SL254) protein is HTH-type transcriptional repressor NanR.